The following is a 252-amino-acid chain: Short-chain dehydrogenase/reductase eriH (252 aa).

Ile16, Asp65, Asn92, Lys125, Tyr158, Lys162, Val191, and Thr193 together coordinate NADP(+). The Proton acceptor role is filled by Tyr158. Tyr158 (proton donor) is an active-site residue. Lys162 (lowers pKa of active site Tyr) is an active-site residue.

Belongs to the short-chain dehydrogenases/reductases (SDR) family.

The catalysed reaction is cyathadiol + reduced [NADPH--hemoprotein reductase] + O2 = cyathatriol + oxidized [NADPH--hemoprotein reductase] + H2O + H(+). It catalyses the reaction 11-O-acetylcyathatriol + A = 11-O-acetylcyathin A3 + AH2. It carries out the reaction cyathatriol + A = cyathin A3 + AH2. It functions in the pathway secondary metabolite biosynthesis. Functionally, short-chain dehydrogenase/reductase; part of the gene cluster that mediates the biosynthesis of erinacines, cyathane-xylosides that show unique biological activities, including leishmanicidal activity, stimulating activity for nerve growth-factor synthesis, and agonistic activity toward the kappa opioid receptor. Within the pathway, eriH works with eriA to catalyze C-11 hydroxylation of cyathadiol to produce cyathatriol. EriH also catalyzes oxidation of 11-O-acetyl-cyathatriol into 1-O-acetylcyathin A3. In the absence of eriL and eriJ, the SDR eriH is able to convert cyathatriol to cyathin A3; this is likely a switching mechanism in the biosynthesis of cyathins (C-14 ketogroup)and erinacines (C-14 glycosylated group). The first step of the erinacines biosynthesis pathway is catalyzed by the geranylgeranyl diphosphate (GGPP) synthase eriE via conversion of farnesyl pyrophosphate and isopentyl pyrophosphate into geranylgeranyl pyrophosphate (GGPP). GGPP is then substrate of the diterpene cyclase eriG for the production of cyatha-3,12-diene. The cytochrome P450 monooxygenase eriI then hydroxylates cyatha-3,12-diene at C-14 of the seven-membered ring to produce erinacol, which is further hydroxylated at C-15 by the cytochrome P450 monooxygenase eriC to yield cyathadiol. The cytochrome P450 monooxygenase eriA then catalyzes C-11 hydroxylation in the presence of the short chain dehydrogenase/reductase (SDR) eriH, which leads to the production of cyathatriol. The acetyltransferase eriL converts cyathatriol into 11-O-acetyl-cyathatriol. The SDR eriH catalyzes further oxidation of 11-O-acetyl-cyathatriol into 1-O-acetylcyathin A3. Finally, the glycosyl transferase eriJ tranfers xylose from UDP-xylose onto C-14 of 11-O-acetyl-cyathatriol to form eracine Q. EriJ is also able to convert 11-O-acetyl-cyathatriol to eracine Q2 by using UDP-D-glucose as cosubstrate, but at a lower rate. The sequence is that of Short-chain dehydrogenase/reductase eriH from Hericium erinaceus (Lion's mane mushroom).